The sequence spans 379 residues: Putative F-box protein At2g33190 (379 aa).

The 48-residue stretch at 6 to 53 folds into the F-box domain; it reads NGWSKLYPDLLRSIFESLSCLDFHRAGTVCSNWYAVSRSCPLYPWRIV.

The protein is Putative F-box protein At2g33190 of Arabidopsis thaliana (Mouse-ear cress).